Reading from the N-terminus, the 288-residue chain is 2-dehydro-3-deoxyphosphooctonate aldolase (288 aa).

The protein belongs to the KdsA family.

The protein localises to the cytoplasm. It catalyses the reaction D-arabinose 5-phosphate + phosphoenolpyruvate + H2O = 3-deoxy-alpha-D-manno-2-octulosonate-8-phosphate + phosphate. Its pathway is carbohydrate biosynthesis; 3-deoxy-D-manno-octulosonate biosynthesis; 3-deoxy-D-manno-octulosonate from D-ribulose 5-phosphate: step 2/3. It functions in the pathway bacterial outer membrane biogenesis; lipopolysaccharide biosynthesis. The protein is 2-dehydro-3-deoxyphosphooctonate aldolase of Syntrophobacter fumaroxidans (strain DSM 10017 / MPOB).